The primary structure comprises 218 residues: Phosphoribosylformylglycinamidine synthase subunit PurQ (218 aa).

In terms of domain architecture, Glutamine amidotransferase type-1 spans 2–218; the sequence is RVGVIRFPGS…FFRGILKFRG (217 aa). Residue Cys-85 is the Nucleophile of the active site. Residues His-192 and Glu-194 contribute to the active site.

Part of the FGAM synthase complex composed of 1 PurL, 1 PurQ and 2 PurS subunits.

The protein resides in the cytoplasm. The catalysed reaction is N(2)-formyl-N(1)-(5-phospho-beta-D-ribosyl)glycinamide + L-glutamine + ATP + H2O = 2-formamido-N(1)-(5-O-phospho-beta-D-ribosyl)acetamidine + L-glutamate + ADP + phosphate + H(+). It catalyses the reaction L-glutamine + H2O = L-glutamate + NH4(+). The protein operates within purine metabolism; IMP biosynthesis via de novo pathway; 5-amino-1-(5-phospho-D-ribosyl)imidazole from N(2)-formyl-N(1)-(5-phospho-D-ribosyl)glycinamide: step 1/2. Its function is as follows. Part of the phosphoribosylformylglycinamidine synthase complex involved in the purines biosynthetic pathway. Catalyzes the ATP-dependent conversion of formylglycinamide ribonucleotide (FGAR) and glutamine to yield formylglycinamidine ribonucleotide (FGAM) and glutamate. The FGAM synthase complex is composed of three subunits. PurQ produces an ammonia molecule by converting glutamine to glutamate. PurL transfers the ammonia molecule to FGAR to form FGAM in an ATP-dependent manner. PurS interacts with PurQ and PurL and is thought to assist in the transfer of the ammonia molecule from PurQ to PurL. This Methanothermobacter thermautotrophicus (strain ATCC 29096 / DSM 1053 / JCM 10044 / NBRC 100330 / Delta H) (Methanobacterium thermoautotrophicum) protein is Phosphoribosylformylglycinamidine synthase subunit PurQ.